A 169-amino-acid chain; its full sequence is Zinc metalloproteinase-disintegrin-like mikarin (169 aa).

One can recognise a Peptidase M12B domain in the interval 14-57; the sequence is KYLEYVVVDNNMYRNYGNAGPCVMSAEISFEPLQEFSSCDIQEP. Residues 65–129 form the Disintegrin domain; sequence PAVCGNYYVE…PEICTGRSAK (65 aa). 6 disulfide bridges follow: cysteine 68–cysteine 97, cysteine 79–cysteine 92, cysteine 81–cysteine 87, cysteine 105–cysteine 111, cysteine 110–cysteine 123, and cysteine 150–cysteine 161. A D/ECD-tripeptide motif is present at residues 116–118; sequence DCD.

The protein belongs to the venom metalloproteinase (M12B) family. P-III subfamily. P-IIIa sub-subfamily. As to quaternary structure, monomer. The cofactor is Zn(2+). Expressed by the venom gland.

Its subcellular location is the secreted. Inhibited by EDTA, but not by PMSF. Snake venom zinc metalloproteinase that calcium-independently catalyzes the conversion of prothrombin (F2) to alpha-thrombin through the formation of a thrombin intermediate. The protein is Zinc metalloproteinase-disintegrin-like mikarin of Micropechis ikaheca (New Guinean small-eyed snake).